The primary structure comprises 158 residues: Endoribonuclease YbeY (158 aa).

The Zn(2+) site is built by histidine 114, histidine 118, and histidine 124.

The protein belongs to the endoribonuclease YbeY family. Requires Zn(2+) as cofactor.

It localises to the cytoplasm. In terms of biological role, single strand-specific metallo-endoribonuclease involved in late-stage 70S ribosome quality control and in maturation of the 3' terminus of the 16S rRNA. The polypeptide is Endoribonuclease YbeY (Pasteurella multocida (strain Pm70)).